Reading from the N-terminus, the 1390-residue chain is DNA-directed RNA polymerase subunit beta (1390 aa).

Belongs to the RNA polymerase beta chain family. In terms of assembly, the RNAP catalytic core consists of 2 alpha, 1 beta, 1 beta' and 1 omega subunit. When a sigma factor is associated with the core the holoenzyme is formed, which can initiate transcription.

The catalysed reaction is RNA(n) + a ribonucleoside 5'-triphosphate = RNA(n+1) + diphosphate. DNA-dependent RNA polymerase catalyzes the transcription of DNA into RNA using the four ribonucleoside triphosphates as substrates. The protein is DNA-directed RNA polymerase subunit beta of Rhodopseudomonas palustris (strain HaA2).